The chain runs to 214 residues: Redox-sensing transcriptional repressor Rex (214 aa).

Residues 17–56 (LYYRIFKRFHADQVEKASSKQIADAMGIDSATVRRDFSYF) constitute a DNA-binding region (H-T-H motif). Residue 91–96 (GCGNIG) participates in NAD(+) binding.

The protein belongs to the transcriptional regulatory Rex family. As to quaternary structure, homodimer.

It localises to the cytoplasm. Modulates transcription in response to changes in cellular NADH/NAD(+) redox state. This Streptococcus pyogenes serotype M4 (strain MGAS10750) protein is Redox-sensing transcriptional repressor Rex.